The chain runs to 415 residues: Squalene synthase 3 (415 aa).

Helical transmembrane passes span 281-301 (AIFR…ALCY) and 392-412 (LIII…SNLP).

This sequence belongs to the phytoene/squalene synthase family. Mg(2+) serves as cofactor. Requires Mn(2+) as cofactor.

Its subcellular location is the endoplasmic reticulum membrane. The enzyme catalyses 2 (2E,6E)-farnesyl diphosphate + NADH + H(+) = squalene + 2 diphosphate + NAD(+). The catalysed reaction is 2 (2E,6E)-farnesyl diphosphate + NADPH + H(+) = squalene + 2 diphosphate + NADP(+). Its pathway is terpene metabolism; lanosterol biosynthesis; lanosterol from farnesyl diphosphate: step 1/3. Functionally, component of the triterpene saponins (e.g. ginsenosides or panaxosides) and phytosterols biosynthetic pathways. Catalyzes the biosynthesis of squalene. In Panax ginseng (Korean ginseng), this protein is Squalene synthase 3.